A 352-amino-acid polypeptide reads, in one-letter code: Alanine racemase (352 aa).

The active-site Proton acceptor; specific for D-alanine is the lysine 33. At lysine 33 the chain carries N6-(pyridoxal phosphate)lysine. Arginine 129 is a substrate binding site. Tyrosine 250 acts as the Proton acceptor; specific for L-alanine in catalysis. Methionine 298 contacts substrate.

Belongs to the alanine racemase family. The cofactor is pyridoxal 5'-phosphate.

The enzyme catalyses L-alanine = D-alanine. Its pathway is amino-acid biosynthesis; D-alanine biosynthesis; D-alanine from L-alanine: step 1/1. Catalyzes the interconversion of L-alanine and D-alanine. May also act on other amino acids. The protein is Alanine racemase (alr) of Neisseria meningitidis serogroup B (strain ATCC BAA-335 / MC58).